Consider the following 347-residue polypeptide: Lipoyl synthase (347 aa).

[4Fe-4S] cluster is bound by residues C77, C82, C88, C103, C107, C110, and S317. Residues 89-306 (FADGTATFMI…MDYGKKIGFF (218 aa)) enclose the Radical SAM core domain.

The protein belongs to the radical SAM superfamily. Lipoyl synthase family. Requires [4Fe-4S] cluster as cofactor.

It localises to the cytoplasm. The catalysed reaction is [[Fe-S] cluster scaffold protein carrying a second [4Fe-4S](2+) cluster] + N(6)-octanoyl-L-lysyl-[protein] + 2 oxidized [2Fe-2S]-[ferredoxin] + 2 S-adenosyl-L-methionine + 4 H(+) = [[Fe-S] cluster scaffold protein] + N(6)-[(R)-dihydrolipoyl]-L-lysyl-[protein] + 4 Fe(3+) + 2 hydrogen sulfide + 2 5'-deoxyadenosine + 2 L-methionine + 2 reduced [2Fe-2S]-[ferredoxin]. Its pathway is protein modification; protein lipoylation via endogenous pathway; protein N(6)-(lipoyl)lysine from octanoyl-[acyl-carrier-protein]: step 2/2. Catalyzes the radical-mediated insertion of two sulfur atoms into the C-6 and C-8 positions of the octanoyl moiety bound to the lipoyl domains of lipoate-dependent enzymes, thereby converting the octanoylated domains into lipoylated derivatives. The chain is Lipoyl synthase from Psychrobacter arcticus (strain DSM 17307 / VKM B-2377 / 273-4).